The primary structure comprises 923 residues: Neuropilin-1 (923 aa).

Positions 1–21 (MERGLPLLCAVLALVLAPAGA) are cleaved as a signal peptide. Residues 22-856 (FRNDKCGDTI…PGNVLKTLDP (835 aa)) lie on the Extracellular side of the membrane. 3 disulfides stabilise this stretch: Cys27–Cys54, Cys82–Cys104, and Cys147–Cys173. 2 CUB domains span residues 27–141 (CGDT…YEIF) and 147–265 (CSQN…YSVL). Asn150 is a glycosylation site (N-linked (GlcNAc...) asparagine). Residues Glu195, Asp209, and Asp250 each coordinate Ca(2+). The cysteines at positions 206 and 228 are disulfide-linked. N-linked (GlcNAc...) asparagine glycans are attached at residues Asn261, Asn300, and Asn522. Intrachain disulfides connect Cys275-Cys424 and Cys431-Cys583. 2 consecutive F5/8 type C domains span residues 275 to 424 (CMEA…VYGC) and 431 to 583 (CSGM…LLGC). An O-linked (Xyl...) (chondroitin sulfate) serine; alternate glycan is attached at Ser612. Ser612 carries O-linked (Xyl...) (heparan sulfate) serine; alternate glycosylation. Residues 645 to 811 (TYGFNCEFGW…NHISQEDCAK (167 aa)) enclose the MAM domain. The segment at 820-845 (PEIKIDETGSTPGYEGEGEGDKNISR) is disordered. O-linked (Xyl...) (chondroitin sulfate) serine glycosylation is present at Ser829. Asn842 carries N-linked (GlcNAc...) asparagine glycosylation. A helical membrane pass occupies residues 857 to 879 (ILITIIAMSALGVLLGAVCGVVL). At 880-923 (YCACWHNGMSERNLSALENYNFELVDGVKLKKDKLNTQSTYSEA) the chain is on the cytoplasmic side. The residue at position 894 (Ser894) is a Phosphoserine.

It belongs to the neuropilin family. In terms of assembly, homodimer, and heterodimer with NRP2. Interacts with FER. Interacts with PLXNB1. Interacts with VEGFA. Interacts with ABCB8/MITOSUR in mitochondria. As to quaternary structure, (Microbial infection) Interacts with SARS coronavirus-2/SARS-CoV-2 spike protein S1 (via the CendR motif RRAR). In terms of tissue distribution, the expression of isoforms 1 and 2 does not seem to overlap. Expressed in olfactory epithelium (at protein level). Expressed in fibroblasts (at protein level). Expressed by the blood vessels of different tissues. In the developing embryo it is found predominantly in the nervous system. In adult tissues, it is highly expressed in heart and placenta; moderately in lung, liver, skeletal muscle, kidney and pancreas; and low in adult brain. Expressed in the central nervous system, including olfactory related regions such as the olfactory tubercles and paraolfactory gyri. As to expression, the expression of isoforms 1 and 2 does not seem to overlap. Found in liver hepatocytes, kidney distal and proximal tubules.

It is found in the secreted. The protein localises to the mitochondrion membrane. Its subcellular location is the cell membrane. The protein resides in the cytoplasm. Cell-surface receptor involved in the development of the cardiovascular system, in angiogenesis, in the formation of certain neuronal circuits and in organogenesis outside the nervous system. Mediates the chemorepulsant activity of semaphorins. Recognizes a C-end rule (CendR) motif R/KXXR/K on its ligands which causes cellular internalization and vascular leakage. It binds to semaphorin 3A, the PLGF-2 isoform of PGF, the VEGF165 isoform of VEGFA and VEGFB. Coexpression with KDR results in increased VEGF165 binding to KDR as well as increased chemotaxis. Regulates VEGF-induced angiogenesis. Binding to VEGFA initiates a signaling pathway needed for motor neuron axon guidance and cell body migration, including for the caudal migration of facial motor neurons from rhombomere 4 to rhombomere 6 during embryonic development. Regulates mitochondrial iron transport via interaction with ABCB8/MITOSUR. Its function is as follows. (Microbial infection) Acts as a host factor for human coronavirus SARS-CoV-2 infection. Recognizes and binds to CendR motif RRAR on SARS-CoV-2 spike protein S1 which enhances SARS-CoV-2 infection. In terms of biological role, binds VEGF-165 and may inhibit its binding to cells. May induce apoptosis by sequestering VEGF-165. May bind as well various members of the semaphorin family. Its expression has an averse effect on blood vessel number and integrity. The polypeptide is Neuropilin-1 (Homo sapiens (Human)).